The following is a 187-amino-acid chain: Choriogonadotropin subunit beta variant 1 (187 aa).

The first 50 residues, 1-50, serve as a signal peptide directing secretion; sequence MSTFPVLAEDIPLRERHVKGRVDPHFRAPKMEMFQRLLLLLLLSMGGTWA. 6 disulfides stabilise this stretch: Cys59-Cys107, Cys73-Cys122, Cys76-Cys160, Cys84-Cys138, Cys88-Cys140, and Cys143-Cys150. Asn63 and Asn80 each carry an N-linked (GlcNAc...) asparagine glycan. The segment at 161 to 187 is disordered; sequence DDPRFQDSSSSKAPPPSLPSPSRLPGP. Over residues 173–187 the composition is skewed to pro residues; sequence APPPSLPSPSRLPGP.

This sequence belongs to the glycoprotein hormones subunit beta family. As to expression, expressed in placenta, testis and pituitary.

Its subcellular location is the secreted. The polypeptide is Choriogonadotropin subunit beta variant 1 (CGB1) (Homo sapiens (Human)).